We begin with the raw amino-acid sequence, 161 residues long: 2-C-methyl-D-erythritol 2,4-cyclodiphosphate synthase (161 aa).

Residues Asp11 and His13 each contribute to the a divalent metal cation site. 4-CDP-2-C-methyl-D-erythritol 2-phosphate is bound by residues 11–13 and 37–38; these read DIH and HS. His45 is an a divalent metal cation binding site. 4-CDP-2-C-methyl-D-erythritol 2-phosphate-binding positions include 59–61 and 135–138; these read DIG and TTNE.

Belongs to the IspF family. As to quaternary structure, homotrimer. A divalent metal cation serves as cofactor.

The enzyme catalyses 4-CDP-2-C-methyl-D-erythritol 2-phosphate = 2-C-methyl-D-erythritol 2,4-cyclic diphosphate + CMP. The protein operates within isoprenoid biosynthesis; isopentenyl diphosphate biosynthesis via DXP pathway; isopentenyl diphosphate from 1-deoxy-D-xylulose 5-phosphate: step 4/6. Involved in the biosynthesis of isopentenyl diphosphate (IPP) and dimethylallyl diphosphate (DMAPP), two major building blocks of isoprenoid compounds. Catalyzes the conversion of 4-diphosphocytidyl-2-C-methyl-D-erythritol 2-phosphate (CDP-ME2P) to 2-C-methyl-D-erythritol 2,4-cyclodiphosphate (ME-CPP) with a corresponding release of cytidine 5-monophosphate (CMP). This Acaryochloris marina (strain MBIC 11017) protein is 2-C-methyl-D-erythritol 2,4-cyclodiphosphate synthase.